The following is an 807-amino-acid chain: Ribosome-releasing factor 2, mitochondrial (807 aa).

Residues 1-18 (MFCRKYVFQTWKQLSRSY) constitute a mitochondrion transit peptide. Residues 27-315 (AKTRNIGIIA…GITKYLPSPL (289 aa)) form the tr-type G domain. GTP contacts are provided by residues 36–43 (AHIDAGKT), 100–104 (DTPGH), and 154–157 (NKMD).

Belongs to the TRAFAC class translation factor GTPase superfamily. Classic translation factor GTPase family. EF-G/EF-2 subfamily.

The protein localises to the mitochondrion. In terms of biological role, mitochondrial GTPase that mediates the disassembly of ribosomes from messenger RNA at the termination of mitochondrial protein biosynthesis. Not involved in the GTP-dependent ribosomal translocation step during translation elongation. This chain is Ribosome-releasing factor 2, mitochondrial, found in Candida albicans (strain SC5314 / ATCC MYA-2876) (Yeast).